We begin with the raw amino-acid sequence, 612 residues long: UvrABC system protein C (612 aa).

In terms of domain architecture, GIY-YIG spans 20–98 (THSGVYRMLD…IKQHRPKYNI (79 aa)). A UVR domain is found at 208–243 (SSVLEEISAKMYQASEDMEYEKAQVYRDQLVVLRKL).

The protein belongs to the UvrC family. Interacts with UvrB in an incision complex.

The protein localises to the cytoplasm. The UvrABC repair system catalyzes the recognition and processing of DNA lesions. UvrC both incises the 5' and 3' sides of the lesion. The N-terminal half is responsible for the 3' incision and the C-terminal half is responsible for the 5' incision. The protein is UvrABC system protein C of Francisella tularensis subsp. holarctica (strain FTNF002-00 / FTA).